The primary structure comprises 80 residues: uncharacterized protein (80 aa).

This is an uncharacterized protein from Acidianus filamentous virus 1 (isolate United States/Yellowstone) (AFV-1).